Consider the following 94-residue polypeptide: Protein S100-A1 (94 aa).

EF-hand domains are found at residues 13–48 (INVFHAHSGKEGDKYKLSKKELKDLLQTELSSFLDV) and 50–85 (KDADAVDKIMKELDENGDGEVDFQEFVVLVAALTVA). Ca(2+) contacts are provided by Lys28, Glu33, Asp63, Asn65, Asp67, Glu69, and Glu74. Cys86 bears the S-nitrosocysteine mark.

This sequence belongs to the S-100 family. In terms of assembly, dimer of either two alpha chains, or two beta chains, or one alpha and one beta chain. Also forms heterodimers with S100P. Interacts with AGER. Interacts with CAPZA1. Interacts with FKBP4. Interacts with RYR1 and RYR2. Interacts with CACYBP in a calcium-dependent manner. Interacts with PPP5C (via TPR repeats); the interaction is calcium-dependent and modulates PPP5C activity. Interacts with ATP2A2 and PLN in a Ca(2+)-dependent manner. Interacts with mitochondrial F1-ATPase subunits ATP5F1A and ATP5F1B; these interactions increase F1-ATPase activity. In terms of processing, glutathionylated; glutathionylation increases affinity to calcium about 10-fold. In terms of tissue distribution, although predominant among the water-soluble brain proteins, S100 is also found in a variety of other tissues.

Its subcellular location is the cytoplasm. The protein localises to the sarcoplasmic reticulum. It is found in the mitochondrion. In terms of biological role, small calcium binding protein that plays important roles in several biological processes such as Ca(2+) homeostasis, chondrocyte biology and cardiomyocyte regulation. In response to an increase in intracellular Ca(2+) levels, binds calcium which triggers conformational changes. These changes allow interactions with specific target proteins and modulate their activity. Regulates a network in cardiomyocytes controlling sarcoplasmic reticulum Ca(2+) cycling and mitochondrial function through interaction with the ryanodine receptors RYR1 and RYR2, sarcoplasmic reticulum Ca(2+)-ATPase/ATP2A2 and mitochondrial F1-ATPase. Facilitates diastolic Ca(2+) dissociation and myofilament mechanics in order to improve relaxation during diastole. The protein is Protein S100-A1 (S100a1) of Rattus norvegicus (Rat).